The following is a 199-amino-acid chain: NAD(P)H dehydrogenase (quinone) (199 aa).

The Flavodoxin-like domain occupies 4–190 (ILVLYYSMYG…KIARYQGEHV (187 aa)). FMN contacts are provided by residues 10 to 15 (SMYGHI) and 79 to 81 (TRF). Tyr12 provides a ligand contact to NAD(+). A substrate-binding site is contributed by Trp99. His134 serves as a coordination point for FMN.

This sequence belongs to the WrbA family. It depends on FMN as a cofactor.

It catalyses the reaction a quinone + NADH + H(+) = a quinol + NAD(+). The enzyme catalyses a quinone + NADPH + H(+) = a quinol + NADP(+). This chain is NAD(P)H dehydrogenase (quinone), found in Photorhabdus laumondii subsp. laumondii (strain DSM 15139 / CIP 105565 / TT01) (Photorhabdus luminescens subsp. laumondii).